Here is a 141-residue protein sequence, read N- to C-terminus: Large ribosomal subunit protein uL11 (141 aa).

The protein belongs to the universal ribosomal protein uL11 family. As to quaternary structure, part of the ribosomal stalk of the 50S ribosomal subunit. Interacts with L10 and the large rRNA to form the base of the stalk. L10 forms an elongated spine to which L12 dimers bind in a sequential fashion forming a multimeric L10(L12)X complex. Post-translationally, one or more lysine residues are methylated.

In terms of biological role, forms part of the ribosomal stalk which helps the ribosome interact with GTP-bound translation factors. The protein is Large ribosomal subunit protein uL11 of Ligilactobacillus salivarius (strain UCC118) (Lactobacillus salivarius).